Reading from the N-terminus, the 228-residue chain is Max-interacting protein 1 (228 aa).

2 disordered regions span residues 29–76 (GYAS…NELE) and 162–228 (GSTI…SFTS). Residues 43 to 56 (QHSKPPRRLSRAQK) are compositionally biased toward basic residues. Over residues 57-70 (HSSGSSNTSTANRS) the composition is skewed to polar residues. The 53-residue stretch at 67–119 (ANRSTHNELEKNRRAHLRLCLERLKVLIPLGPDCTRHTTLGLLNKAKAHIKKL) folds into the bHLH domain. Acidic residues predominate over residues 173–183 (EREEIEVDVES). The segment covering 216–228 (GYSSASVKLSFTS) has biased composition (polar residues).

In terms of assembly, efficient DNA binding requires dimerization with another bHLH protein. Binds DNA as a heterodimer with MAX. Interacts with SMC3. Interacts with RNF17.

The protein localises to the nucleus. Transcriptional repressor. MXI1 binds with MAX to form a sequence-specific DNA-binding protein complex which recognizes the core sequence 5'-CAC[GA]TG-3'. MXI1 thus antagonizes MYC transcriptional activity by competing for MAX. The chain is Max-interacting protein 1 (Mxi1) from Rattus norvegicus (Rat).